We begin with the raw amino-acid sequence, 144 residues long: Large ribosomal subunit protein uL15 (144 aa).

A disordered region spans residues 1-60; it reads MRLNSLRPAAGSRPDANRVGRGAGTGNGKTAGRGHKGQHSRSGGFTKVGFEGGQMPLQRR. Residues 21–31 are compositionally biased toward gly residues; it reads RGAGTGNGKTA.

It belongs to the universal ribosomal protein uL15 family. As to quaternary structure, part of the 50S ribosomal subunit.

In terms of biological role, binds to the 23S rRNA. This Alkalilimnicola ehrlichii (strain ATCC BAA-1101 / DSM 17681 / MLHE-1) protein is Large ribosomal subunit protein uL15.